Reading from the N-terminus, the 236-residue chain is LexA repressor (236 aa).

The segment at residues 26–46 (FDEMKDALDLRSKSGIHRLIT) is a DNA-binding region (H-T-H motif). A disordered region spans residues 85 to 109 (PSVIEGNLGKVRPPSPTPAEDDHDR). Catalysis depends on for autocatalytic cleavage activity residues S157 and K195.

Belongs to the peptidase S24 family. Homodimer.

The catalysed reaction is Hydrolysis of Ala-|-Gly bond in repressor LexA.. Represses a number of genes involved in the response to DNA damage (SOS response), including recA and lexA. In the presence of single-stranded DNA, RecA interacts with LexA causing an autocatalytic cleavage which disrupts the DNA-binding part of LexA, leading to derepression of the SOS regulon and eventually DNA repair. This Rhodopseudomonas palustris (strain ATCC BAA-98 / CGA009) protein is LexA repressor.